We begin with the raw amino-acid sequence, 679 residues long: Acetyl-coenzyme A synthetase 2 (679 aa).

The interval Met1–Gln32 is disordered. The segment covering Asn14–Pro30 has biased composition (basic and acidic residues). CoA-binding positions include Arg207–Lys210 and Thr326. Residues Gly402–Pro404, Asp426–Thr431, Asp517, and Arg532 each bind ATP. Ser540 lines the CoA pocket. Arg543 provides a ligand contact to ATP. CoA is bound at residue Arg611.

Belongs to the ATP-dependent AMP-binding enzyme family.

It carries out the reaction acetate + ATP + CoA = acetyl-CoA + AMP + diphosphate. The sequence is that of Acetyl-coenzyme A synthetase 2 (ACS2) from Debaryomyces hansenii (strain ATCC 36239 / CBS 767 / BCRC 21394 / JCM 1990 / NBRC 0083 / IGC 2968) (Yeast).